A 1036-amino-acid polypeptide reads, in one-letter code: MKFFTASTLFLLAAQSLNSGVSASLSDPANTPTILADDIVHGYTPATYLSSVPTLLKRATTSYNYNTSSASSSSLTSSSAASSSLTSSSSLASSSTNSTTSASPTSSSLTSSSATSSSLASSSTTSSSLASSSITSSSLASSSITSSSLASSSTTSSSLASSSTNSTTSATPTSSATSSSLSSTAASNSATSSSLASSSLNSTTSATATSSSLSSTAASNSATSSSLASSSLNSTTSATATSSSISSTVSSSTPLTSSNSTTAATSASATSSSAQYNTSSLLPSSTPSSTPLSSANSTTATSASSTPLTSVNSTTTTSASSTPLSSVSSANSTTATSTSSTPLSSVNSTTATSASSTPLTSVNSTTATSASSTPLTSVNSTSATSASSTPLTSANSTTSTSVSSTAPSYNTSSVLPTSSVSSTPLSSANSTTATSASSTPLSSVNSTTATSASSTPLSSVNSTTATSASSTPLTSVNSTTATSASSTPLTSVNSTSATSASSTPLTSANSTTSTSVSSTAPSYNTSSVLPTSSVSSTPLSSANSTTATSASSTPLTSVNSTTATSASSTPFGNSTITSSASGSTGEFTNTNSGNGDVSGSVTTPTSTPLSNSTVAPTSTFTSSGFNTTSGLPTSSASTPLSNSTVAPTSTFTSSGFNTTSGLPTSSASTPSSNSSIVPTSTFTSSGFNTTSGLPTSSASTPLSNSTVAPTSTFTSSGFNTTSGLPTSSVSTPLSNSSAYPSSGSSTFSRLSSTLTSSIIPTETFGSTSGSATGTRPTGSSSQGSVVPTTSTGSSVTSTGTGTTTGVTEVTETSTFETTEIITSTIEPTTASGTGGGNPTAAPTNEPTVTTGTETTEGTATYTEPTTFTSTFSFTTTIIGGTTTIIPVNPGNPSSSVSAPPTTSFTPGPGGSGYPSYSNTTQGMNTTSIWNSSNSTIVSNVTATITGNVTITTGDLTTIDPTTFTSTYLSSGFQTVSNTTATSGSDDDVKTASTSSSTSYTSSSSSSSSTTSAASSKASVSMGLNGLMIAAVILLVA.

Residues 1–23 form the signal peptide; the sequence is MKFFTASTLFLLAAQSLNSGVSA. N-linked (GlcNAc...) asparagine glycosylation is found at Asn66, Asn97, Asn165, Asn201, Asn233, Asn259, Asn277, Asn296, Asn312, Asn331, Asn347, Asn363, Asn379, Asn395, Asn410, Asn429, Asn445, Asn461, Asn477, Asn493, Asn509, Asn524, Asn543, Asn559, and Asn573. 2 disordered regions span residues 88-130 and 147-183; these read SSSL…SSLA and SSLA…SLSS. Positions 243–585 are enriched in low complexity; that stretch reads SSISSTVSSS…ITSSASGSTG (343 aa). The tract at residues 243–710 is disordered; sequence SSISSTVSSS…PLSNSTVAPT (468 aa). The segment covering 586-595 has biased composition (polar residues); that stretch reads EFTNTNSGNG. Over residues 597–630 the composition is skewed to low complexity; that stretch reads VSGSVTTPTSTPLSNSTVAPTSTFTSSGFNTTSG. Asn611, Asn626, Asn642, Asn657, Asn673, Asn688, Asn704, Asn719, and Asn735 each carry an N-linked (GlcNAc...) asparagine glycan. Polar residues predominate over residues 631–647; it reads LPTSSASTPLSNSTVAP. Low complexity predominate over residues 648-692; it reads TSTFTSSGFNTTSGLPTSSASTPSSNSSIVPTSTFTSSGFNTTSG. Positions 693 to 709 are enriched in polar residues; it reads LPTSSASTPLSNSTVAP. Low complexity-rich tracts occupy residues 722–831, 838–862, and 885–906; these read SGLP…TTAS, PTAA…ATYT, and IPVN…SFTP. Disordered stretches follow at residues 722–862 and 885–918; these read SGLP…ATYT and IPVN…SYSN. N-linked (GlcNAc...) asparagine glycosylation is found at Asn918, Asn924, Asn930, Asn933, Asn939, Asn947, and Asn977. The segment at 978–1011 is disordered; sequence TTATSGSDDDVKTASTSSSTSYTSSSSSSSSTTS. Low complexity predominate over residues 990–1011; that stretch reads TASTSSSTSYTSSSSSSSSTTS. Ser1011 carries the GPI-anchor amidated serine lipid modification. Residues 1012–1036 constitute a propeptide, removed in mature form; sequence AASSKASVSMGLNGLMIAAVILLVA.

It localises to the cell membrane. May be involved in agglutination during conjugation or other aspects of colony formation. Induces flocculation when overexpressed. The polypeptide is Putative GPI-anchored protein pfl2 (Schizosaccharomyces pombe (strain 972 / ATCC 24843) (Fission yeast)).